We begin with the raw amino-acid sequence, 186 residues long: Large ribosomal subunit protein eL18 (186 aa).

This sequence belongs to the eukaryotic ribosomal protein eL18 family. In terms of assembly, component of the large ribosomal subunit. Mature ribosomes consist of a small (40S) and a large (60S) subunit. The 40S subunit contains about 32 different proteins and 1 molecule of RNA (18S). The 60S subunit contains 45 different proteins and 3 molecules of RNA (25S, 5.8S and 5S).

The protein localises to the cytoplasm. Its function is as follows. Component of the ribosome, a large ribonucleoprotein complex responsible for the synthesis of proteins in the cell. The small ribosomal subunit (SSU) binds messenger RNAs (mRNAs) and translates the encoded message by selecting cognate aminoacyl-transfer RNA (tRNA) molecules. The large subunit (LSU) contains the ribosomal catalytic site termed the peptidyl transferase center (PTC), which catalyzes the formation of peptide bonds, thereby polymerizing the amino acids delivered by tRNAs into a polypeptide chain. The nascent polypeptides leave the ribosome through a tunnel in the LSU and interact with protein factors that function in enzymatic processing, targeting, and the membrane insertion of nascent chains at the exit of the ribosomal tunnel. The sequence is that of Large ribosomal subunit protein eL18 from Candida albicans (strain SC5314 / ATCC MYA-2876) (Yeast).